The primary structure comprises 227 residues: 2-C-methyl-D-erythritol 4-phosphate cytidylyltransferase (227 aa).

Belongs to the IspD/TarI cytidylyltransferase family. IspD subfamily.

It catalyses the reaction 2-C-methyl-D-erythritol 4-phosphate + CTP + H(+) = 4-CDP-2-C-methyl-D-erythritol + diphosphate. It functions in the pathway isoprenoid biosynthesis; isopentenyl diphosphate biosynthesis via DXP pathway; isopentenyl diphosphate from 1-deoxy-D-xylulose 5-phosphate: step 2/6. In terms of biological role, catalyzes the formation of 4-diphosphocytidyl-2-C-methyl-D-erythritol from CTP and 2-C-methyl-D-erythritol 4-phosphate (MEP). This is 2-C-methyl-D-erythritol 4-phosphate cytidylyltransferase from Mycobacterium marinum (strain ATCC BAA-535 / M).